The following is a 153-amino-acid chain: D-aminoacyl-tRNA deacylase (153 aa).

Positions 137-138 match the Gly-cisPro motif, important for rejection of L-amino acids motif; sequence GP.

It belongs to the DTD family. As to quaternary structure, homodimer.

It is found in the cytoplasm. It catalyses the reaction glycyl-tRNA(Ala) + H2O = tRNA(Ala) + glycine + H(+). The catalysed reaction is a D-aminoacyl-tRNA + H2O = a tRNA + a D-alpha-amino acid + H(+). Its function is as follows. An aminoacyl-tRNA editing enzyme that deacylates mischarged D-aminoacyl-tRNAs. Also deacylates mischarged glycyl-tRNA(Ala), protecting cells against glycine mischarging by AlaRS. Acts via tRNA-based rather than protein-based catalysis; rejects L-amino acids rather than detecting D-amino acids in the active site. By recycling D-aminoacyl-tRNA to D-amino acids and free tRNA molecules, this enzyme counteracts the toxicity associated with the formation of D-aminoacyl-tRNA entities in vivo and helps enforce protein L-homochirality. This Dehalococcoides mccartyi (strain ATCC BAA-2100 / JCM 16839 / KCTC 5957 / BAV1) protein is D-aminoacyl-tRNA deacylase.